Reading from the N-terminus, the 290-residue chain is MLPDSSVRLNKYISESGICSRREADRYIEQGNVFLNGKRATIGDQVKPGDVVKVNGQLIEPRESEDLVLIALNKPVGIVSTTEDGERDNIVDFVNHSKRVFPIGRLDKDSQGLIFLTNHGDLVNKILRAGNDHEKEYLVTVDKPITDEFIRGMGAGVPILGTVTKKCKVKKEAPFVFRITLVQGLNRQIRRMCEHFGYEVKKLERTRIMNVSLSGIPLGEWRDLTDDELIDLFKLIENSSSEAKPKAKAKPKTVGIKRPVVKMEKTAEKGGRPASNGKRFTSPGRKKKGR.

The 68-residue stretch at 7–74 folds into the S4 RNA-binding domain; sequence VRLNKYISES…EDLVLIALNK (68 aa). 2 interaction with RNA regions span residues 105–108 and 187–190; these read RLDK and RQIR. The Nucleophile role is filled by D107. The disordered stretch occupies residues 241–290; it reads SEAKPKAKAKPKTVGIKRPVVKMEKTAEKGGRPASNGKRFTSPGRKKKGR. Residues 261–271 are compositionally biased toward basic and acidic residues; it reads VKMEKTAEKGG.

This sequence belongs to the pseudouridine synthase RsuA family. As to quaternary structure, monomer.

The enzyme catalyses uridine(2604) in 23S rRNA = pseudouridine(2604) in 23S rRNA. The catalysed reaction is uridine(35) in tRNA(Tyr) = pseudouridine(35) in tRNA(Tyr). Its function is as follows. Dual specificity enzyme that catalyzes the synthesis of pseudouridine from uracil-2604 in 23S ribosomal RNA and from uracil-35 in the anticodon of tRNA(Tyr). The sequence is that of Dual-specificity RNA pseudouridine synthase RluF (rluF) from Escherichia coli O6:H1 (strain CFT073 / ATCC 700928 / UPEC).